A 943-amino-acid chain; its full sequence is Translation initiation factor IF-2 (943 aa).

Positions 29-349 are disordered; that stretch reads LSVKSHSSSV…NNRGNSAPKL (321 aa). Basic and acidic residues-rich tracts occupy residues 69–82, 112–137, 145–155, 163–196, and 224–253; these read PKEE…DKAS, FKAE…DNRN, QGKRHNNDRRN, DHNK…RDNA, and RQSE…EKQQ. Residues 254-266 are compositionally biased toward low complexity; the sequence is AEVAVQKAAAETK. Over residues 296-309 the composition is skewed to basic and acidic residues; it reads KSRDNHRVNEDGPK. Residues 313–332 show a composition bias toward low complexity; that stretch reads NNKWNNQNQVRNQRNSNWNK. The tr-type G domain maps to 445–614; that stretch reads ERAPVVTIMG…LLVAEVEELK (170 aa). Residues 454 to 461 are G1; that stretch reads GHVDHGKT. 454–461 is a GTP binding site; the sequence is GHVDHGKT. The segment at 479-483 is G2; it reads GITQH. The tract at residues 500–503 is G3; it reads DTPG. Residues 500–504 and 554–557 each bind GTP; these read DTPGH and NKID. The tract at residues 554–557 is G4; the sequence is NKID. The segment at 590–592 is G5; sequence SAK.

This sequence belongs to the TRAFAC class translation factor GTPase superfamily. Classic translation factor GTPase family. IF-2 subfamily.

The protein localises to the cytoplasm. In terms of biological role, one of the essential components for the initiation of protein synthesis. Protects formylmethionyl-tRNA from spontaneous hydrolysis and promotes its binding to the 30S ribosomal subunits. Also involved in the hydrolysis of GTP during the formation of the 70S ribosomal complex. In Streptococcus thermophilus (strain ATCC BAA-491 / LMD-9), this protein is Translation initiation factor IF-2.